Here is a 393-residue protein sequence, read N- to C-terminus: MEHLLNPKAREIEISGIRKFSNLVAQHEDVISLTIGQPDFFTPHHVKAAAKKAIDENVTSYTPNAGYLELRQAVQLYMKKKADFNYDAESEIIITTGASQAIDAAFRTILSPGDEVIMPGPIYPGYEPIINLCGAKPVIVDTTSHGFKLTARLIEDALTPNTKCVVLPYPSNPTGVTLSEEELKSIAALLKGRNVFVLSDEIYSELTYDRPHYSIATYLRDQTIVINGLSKSHSMTGWRIGFLFAPKDIAKHILKVHQYNVSCASSISQKAALEAVTNGFDDALIMREQYKKRLDYVYDRLVSMGLDVVKPSGAFYIFPSIKSFGMTSFDFSMALLEDAGVALVPGSSFSTYGEGYVRLSFACSMDTLREGLDRLELFVLKKREAMQTINNGV.

An N6-(pyridoxal phosphate)lysine modification is found at lysine 231.

The protein belongs to the class-I pyridoxal-phosphate-dependent aminotransferase family. Homodimer. Pyridoxal 5'-phosphate serves as cofactor.

It localises to the cytoplasm. The enzyme catalyses N-acetyl-(2S,6S)-2,6-diaminopimelate + 2-oxoglutarate = L-2-acetamido-6-oxoheptanedioate + L-glutamate. The protein operates within amino-acid biosynthesis; L-lysine biosynthesis via DAP pathway; LL-2,6-diaminopimelate from (S)-tetrahydrodipicolinate (acetylase route): step 2/3. Essential for murein biosynthesis. Probably catalyzes the conversion of L-2-acetamido-6-oxopimelate to N-acetyl-LL-2,6-diaminopimelate. The sequence is that of Probable N-acetyl-LL-diaminopimelate aminotransferase from Bacillus subtilis (strain 168).